Here is a 240-residue protein sequence, read N- to C-terminus: 3-dehydroquinate dehydratase (240 aa).

3-dehydroquinate is bound by residues serine 15, 42–44 (EWR), and arginine 73. The Proton donor/acceptor role is filled by histidine 132. Lysine 160 functions as the Schiff-base intermediate with substrate in the catalytic mechanism. The 3-dehydroquinate site is built by arginine 202, serine 221, and glutamine 225.

This sequence belongs to the type-I 3-dehydroquinase family. In terms of assembly, homodimer.

The catalysed reaction is 3-dehydroquinate = 3-dehydroshikimate + H2O. It participates in metabolic intermediate biosynthesis; chorismate biosynthesis; chorismate from D-erythrose 4-phosphate and phosphoenolpyruvate: step 3/7. Its function is as follows. Involved in the third step of the chorismate pathway, which leads to the biosynthesis of aromatic amino acids. Catalyzes the cis-dehydration of 3-dehydroquinate (DHQ) and introduces the first double bond of the aromatic ring to yield 3-dehydroshikimate. The sequence is that of 3-dehydroquinate dehydratase from Latilactobacillus sakei subsp. sakei (strain 23K) (Lactobacillus sakei subsp. sakei).